Consider the following 172-residue polypeptide: C-phycocyanin-2 beta subunit (172 aa).

N72 is modified (N4-methylasparagine). (2R,3E)-phycocyanobilin is bound by residues C82 and C153.

This sequence belongs to the phycobiliprotein family. Heterodimer of an alpha and a beta subunit, which further assembles into trimers and the trimers into hexamers. In terms of processing, contains two covalently linked bilin chromophores.

Its subcellular location is the cellular thylakoid membrane. Its function is as follows. Light-harvesting photosynthetic bile pigment-protein from the phycobiliprotein complex (phycobilisome, PBS). Phycocyanin is the major phycobiliprotein in the PBS rod. This Pseudanabaena tenuis (strain PCC 7409) protein is C-phycocyanin-2 beta subunit (cpcB2).